Here is a 729-residue protein sequence, read N- to C-terminus: MACPRVIFLILITFFILQTAFSSSWQTLSGKPPAVIARGGFSGMFPDSSIQAYQLVNITTSPDVMLWCDLQLTKDGVGICFPNLKLDNGSNVIRIDPHYKERFSVDFTWKELSDVKLAQGVVSRPYIFDDVSSILAIEEVAKLTASGLWLNIQDSAFYAKHNLSMRNSVVSLSRRLKVNFISSPGISFLKSMKNSVKPTVTKLIFRFLKQEHIEPFTNQSYGSLAKNLSYIRTFSSGILVPKSYIWPVDSALYLQPHTSLVTDAHKEGLQVFASEFANDFVIAYNYSYDPTAEYLSFIDNGNFSVDGFLSDFPVTPYRAINCFSHVDPKRAKEQAKITIISKNGASGDFPGCTDLAYQRAASDGADILDCNVQMSKDKIPFCMSSFDLINSTNVIETSFRNLSSVVSEINPRRSGIYTFSLTMSQIQTLKPTISNLEKDSGLFRNPRNNKAGKFLTLSEFLFLPNRYSSLLGLLIEVENAAYLVEHQGISVVDAVLDELKRATTQQNKTSARTILIQSTDKSVLMKFKEKNKMNHDELVYRVDDNIRDVADSAIKDIKNFAGSIVISKKSVFPYKGFIILEKETNIASKLKSNGLRVYVERFSNECVTHAFDFYDDPTLEIDSFVRDVQIDGIITDFPATTARYRKNKCYGEFGLTTTGELITFANPMLLPPAEAPYPALLDSDVTEPPLPEARSQPPASSPSKAEEKAIEVPFAFIAMAILVCFFISV.

The signal sequence occupies residues 1 to 22; the sequence is MACPRVIFLILITFFILQTAFS. GP-PDE domains follow at residues 33–320 and 337–645; these read PAVI…YRAI and ITII…ARYR. N-linked (GlcNAc...) asparagine glycosylation is found at Asn-88, Asn-162, Asn-218, Asn-227, Asn-285, Asn-302, Asn-390, Asn-401, and Asn-507. The chain crosses the membrane as a helical span at residues 709–729; the sequence is AIEVPFAFIAMAILVCFFISV.

Belongs to the glycerophosphoryl diester phosphodiesterase family. Expressed in stems, flowers and siliques.

The protein localises to the membrane. The catalysed reaction is a sn-glycero-3-phosphodiester + H2O = an alcohol + sn-glycerol 3-phosphate + H(+). This is Glycerophosphodiester phosphodiesterase GDPDL5 from Arabidopsis thaliana (Mouse-ear cress).